The sequence spans 406 residues: Argininosuccinate synthase (406 aa).

Position 8 to 16 (8 to 16 (AYSGGLDTS)) interacts with ATP. L-citrulline is bound at residue Tyr-86. ATP is bound at residue Gly-116. Residues Thr-118, Asn-122, and Asp-123 each contribute to the L-aspartate site. Asn-122 is an L-citrulline binding site. 5 residues coordinate L-citrulline: Arg-126, Ser-174, Ser-183, Glu-259, and Tyr-271.

The protein belongs to the argininosuccinate synthase family. Type 1 subfamily. Homotetramer.

Its subcellular location is the cytoplasm. It carries out the reaction L-citrulline + L-aspartate + ATP = 2-(N(omega)-L-arginino)succinate + AMP + diphosphate + H(+). It participates in amino-acid biosynthesis; L-arginine biosynthesis; L-arginine from L-ornithine and carbamoyl phosphate: step 2/3. In Oenococcus oeni (strain ATCC BAA-331 / PSU-1), this protein is Argininosuccinate synthase.